Consider the following 152-residue polypeptide: Phospholipase A2 (152 aa).

The first 20 residues, 1-20, serve as a signal peptide directing secretion; that stretch reads MAACHRILLLLSVAVASGAA. Disulfide bonds link Cys-39–Cys-96, Cys-53–Cys-142, Cys-55–Cys-70, Cys-69–Cys-124, Cys-75–Cys-149, Cys-76–Cys-117, Cys-85–Cys-110, and Cys-103–Cys-115. Ca(2+)-binding residues include Gly-56 and Gly-58. Residue His-73 is part of the active site. Position 74 (Asp-74) interacts with Ca(2+). The active site involves Asp-118.

Belongs to the phospholipase A2 family. Expressed by the venom gland. Heavily expressed in the venom gland transcriptome.

The protein localises to the secreted. The catalysed reaction is a 1,2-diacyl-sn-glycero-3-phosphocholine + H2O = a 1-acyl-sn-glycero-3-phosphocholine + a fatty acid + H(+). Its function is as follows. PA2 catalyzes the calcium-dependent hydrolysis of the 2-acyl groups in 3-sn-phosphoglycerides. The chain is Phospholipase A2 from Meiacanthus atrodorsalis (Forktail blenny).